Here is a 1791-residue protein sequence, read N- to C-terminus: Sodium channel protein type 11 subunit alpha (1791 aa).

At 1 to 126 (MDDRCYPVIF…SIRSLAIRVS (126 aa)) the chain is on the cytoplasmic side. An I repeat occupies 115–408 (FNSIRSLAIR…VTMAYEEQNK (294 aa)). The chain crosses the membrane as a helical span at residues 127–148 (VHSLFSMFIIGTVIINCVFMAT). Over 149–156 (GPAKNSNS) the chain is Extracellular. The chain crosses the membrane as a helical span at residues 157–180 (NNTDIAECVFTGIYIFEALIKILA). At 181–192 (RGFILDEFSFLR) the chain is on the cytoplasmic side. A helical transmembrane segment spans residues 193-212 (DPWNWLDSIVIGIAIVSYIP). Residues 213–219 (GITIKLL) are Extracellular-facing. A helical; Voltage-sensor transmembrane segment spans residues 220 to 239 (PLRTFRVFRALKAISVVSRL). Residues 240–255 (KVIVGALLRSVKKLVN) lie on the Cytoplasmic side of the membrane. Residues 256–269 (VIILTFFCLSIFAL) traverse the membrane as a helical segment. Over 270–344 (VGQQLFMGSL…PDYNYTNFDN (75 aa)) the chain is Extracellular. A disulfide bridge links C283 with C322. N-linked (GlcNAc...) asparagine glycosylation is found at N290 and N338. The segment at residues 345–369 (FGWSFLAMFRLMTQDSWEKLYQQTL) is an intramembrane region (pore-forming). Residues 370-376 (RTTGLYS) are Extracellular-facing. Residues 377–402 (VFFFIVVIFLGSFYLINLTLAVVTMA) form a helical membrane-spanning segment. At 403-572 (YEEQNKNVAA…WLCVKKVLRT (170 aa)) the chain is on the cytoplasmic side. Residues 559–833 (CCPQWLCVKK…EGEARKTKVQ (275 aa)) form an II repeat. A helical transmembrane segment spans residues 573 to 596 (VMTDPFTELAITICIIINTVFLAM). At 597–607 (EHHKMEASFEK) the chain is on the extracellular side. The helical transmembrane segment at 608–631 (MLNIGNLVFTSIFIAEMCLKIIAL) threads the bilayer. The Cytoplasmic portion of the chain corresponds to 632 to 639 (DPYHYFRR). Residues 640–659 (GWNIFDSIVALLSFADVMNC) form a helical membrane-spanning segment. Residues 660 to 667 (VLQKRSWP) are Extracellular-facing. A helical; Voltage-sensor membrane pass occupies residues 668–687 (FLRSFRVLRVFKLAKSWPTL). Topologically, residues 688 to 702 (NTLIKIIGNSVGALG) are cytoplasmic. A helical transmembrane segment spans residues 703–725 (SLTVVLVIVIFIFSVVGMQLFGR). Topologically, residues 726–753 (SFNSQKSPKLCNPTGPTVSCLRHWHMGD) are extracellular. Residues 754–774 (FWHSFLVVFRILCGEWIENMW) constitute an intramembrane region (pore-forming). Over 775-785 (ECMQEANASSS) the chain is Extracellular. A disulfide bond links C776 and C787. N-linked (GlcNAc...) asparagine glycosylation is present at N781. The chain crosses the membrane as a helical span at residues 786 to 811 (LCVIVFILITVIGKLVVLNLFIALLL). Residues 812–1051 (NSFSNEERNG…WWNLRKTCYQ (240 aa)) lie on the Cytoplasmic side of the membrane. The III repeat unit spans residues 1044 to 1339 (NLRKTCYQIV…KKYYNAMKKL (296 aa)). A helical transmembrane segment spans residues 1052 to 1074 (IVKHSWFESFIIFVILLSSGALI). Over 1075 to 1088 (FEDVHLENQPKIQE) the chain is Extracellular. The chain crosses the membrane as a helical span at residues 1089–1114 (LLNCTDIIFTHIFILEMVLKWVAFGF). Topologically, residues 1115-1120 (GKYFTS) are cytoplasmic. The helical transmembrane segment at 1121–1138 (AWCCLDFIIVIVSVTTLI) threads the bilayer. Position 1139 (N1139) is a topological domain, extracellular. Residues 1140–1161 (LMELKSFRTLRALRPLRALSQF) form a helical; Voltage-sensor membrane-spanning segment. Topologically, residues 1162 to 1180 (EGMKVVVNALIGAIPAILN) are cytoplasmic. A helical membrane pass occupies residues 1181-1202 (VLLVCLIFWLVFCILGVYFFSG). Residues 1203–1243 (KFGKCINGTDSVINYTIITNKSQCESGNFSWINQKVNFDNV) are Extracellular-facing. N1209, N1216, N1222, and N1230 each carry an N-linked (GlcNAc...) asparagine glycan. The segment at residues 1244–1265 (GNAYLALLQVATFKGWMDIIYA) is an intramembrane region (pore-forming). Residues 1266–1281 (AVDSTEKEQQPEFESN) lie on the Extracellular side of the membrane. Residues 1282–1308 (SLGYIYFVVFIIFGSFFTLNLFIGVII) traverse the membrane as a helical segment. The Cytoplasmic portion of the chain corresponds to 1309–1361 (DNFNQQQKKLGGQDIFMTEEQKKYYNAMKKLGSKKPQKPIPRPLNKCQGLVFD). The IV repeat unit spans residues 1348-1639 (IPRPLNKCQG…WEKFDPEATQ (292 aa)). The chain crosses the membrane as a helical span at residues 1362–1385 (IVTSQIFDIIIISLIILNMISMMA). Topologically, residues 1386 to 1396 (ESYNQPKAMKS) are extracellular. A helical membrane pass occupies residues 1397–1420 (ILDHLNWVFVVIFTLECLIKIFAL). The Cytoplasmic portion of the chain corresponds to 1421–1426 (RQYYFT). A helical membrane pass occupies residues 1427–1450 (NGWNLFDCVVVLLSIVSTMISTLE). Over 1451-1461 (NQEHIPFPPTL) the chain is Extracellular. Residues 1462-1484 (FRIVRLARIGRILRLVRAARGIR) traverse the membrane as a helical; Voltage-sensor segment. At 1485–1499 (TLLFALMMSLPSLFN) the chain is on the cytoplasmic side. Residues 1500–1522 (IGLLLFLIMFIYAILGMNWFSKV) form a helical membrane-spanning segment. At 1523–1536 (NPESGIDDIFNFKT) the chain is on the extracellular side. An intramembrane region (pore-forming) is located at residues 1537-1559 (FASSMLCLFQISTSAGWDSLLSP). At 1560–1579 (MLRSKESCNSSSENCHLPGI) the chain is on the extracellular side. The N-linked (GlcNAc...) asparagine glycan is linked to N1568. Residues 1580–1604 (ATSYFVSYIIISFLIVVNMYIAVIL) form a helical membrane-spanning segment. Topologically, residues 1605 to 1791 (ENFNTATEES…GVAKGKVHCD (187 aa)) are cytoplasmic.

This sequence belongs to the sodium channel (TC 1.A.1.10) family. Nav1.9/SCN11A subfamily. The voltage-resistant sodium channel consists of an ion conducting pore forming alpha-subunit regulated by one or more auxiliary subunits SCN1B, SCN2B and SCN3B. Expressed in the dorsal root ganglia and trigeminal ganglia, olfactory bulb, hippocampus, cerebellar cortex, spinal cord, spleen, small intestine and placenta.

Its subcellular location is the cell membrane. It carries out the reaction Na(+)(in) = Na(+)(out). Activity is not sensitive to inhibition by tetrodotoxin. Sodium channel mediating the voltage-dependent sodium ion permeability of excitable membranes. Assuming opened or closed conformations in response to the voltage difference across the membrane, the protein forms a sodium-selective channel through which sodium ions may pass in accordance with their electrochemical gradient. Involved in membrane depolarization during action potential in nociceptors which function as key relay stations for the electrical transmission of pain signals from the periphery to the central nervous system. Also involved in rapid BDNF-evoked neuronal depolarization. This is Sodium channel protein type 11 subunit alpha from Homo sapiens (Human).